A 116-amino-acid polypeptide reads, in one-letter code: Aspartate 1-decarboxylase (116 aa).

Residue Ser25 is the Schiff-base intermediate with substrate; via pyruvic acid of the active site. Position 25 is a pyruvic acid (Ser) (Ser25). Thr57 provides a ligand contact to substrate. Residue Tyr58 is the Proton donor of the active site. 73–75 (GAA) serves as a coordination point for substrate.

It belongs to the PanD family. As to quaternary structure, heterooctamer of four alpha and four beta subunits. Requires pyruvate as cofactor. In terms of processing, is synthesized initially as an inactive proenzyme, which is activated by self-cleavage at a specific serine bond to produce a beta-subunit with a hydroxyl group at its C-terminus and an alpha-subunit with a pyruvoyl group at its N-terminus.

The protein localises to the cytoplasm. It catalyses the reaction L-aspartate + H(+) = beta-alanine + CO2. Its pathway is cofactor biosynthesis; (R)-pantothenate biosynthesis; beta-alanine from L-aspartate: step 1/1. Its function is as follows. Catalyzes the pyruvoyl-dependent decarboxylation of aspartate to produce beta-alanine. The sequence is that of Aspartate 1-decarboxylase from Christiangramia forsetii (strain DSM 17595 / CGMCC 1.15422 / KT0803) (Gramella forsetii).